Consider the following 685-residue polypeptide: Putative protein FAR1-RELATED SEQUENCE 10 (685 aa).

In terms of domain architecture, FAR1 spans 69–161 (EYYSTFARKS…SNVHNHELLE (93 aa)). Residues 292-388 (VVVFDTSYRS…FMSHIVSKLA (97 aa)) form the MULE domain. The segment at 565–603 (GECCVIWNPENEEIQCSCKEFEHSGILCRHTLRVLTVKN) adopts an SWIM-type zinc-finger fold.

Belongs to the FHY3/FAR1 family.

This is Putative protein FAR1-RELATED SEQUENCE 10 (FRS10) from Arabidopsis thaliana (Mouse-ear cress).